Here is a 405-residue protein sequence, read N- to C-terminus: POC1 centriolar protein homolog A (405 aa).

WD repeat units follow at residues 17 to 56 (GHRD…RAYR), 59 to 98 (GHKD…ESTV), 101 to 140 (AHTA…FLFS), 143 to 182 (QHIN…CIHS), 185 to 224 (EHGG…LLQH), 227 to 266 (LHSA…LLYT), and 269 to 308 (GHQG…VDYG). Residues 313-352 (RRPPPLTSSSGTLPKMDLPVPPGRDRSLESVQGEPQESIS) form a disordered region. A compositionally biased stretch (polar residues) spans 341-352 (ESVQGEPQESIS). Residues 367–395 (QLDILTQTVSILEQRLTLTEDRLKQCLEN) adopt a coiled-coil conformation.

This sequence belongs to the WD repeat POC1 family. In terms of assembly, interacts with POC1B. In terms of tissue distribution, widely expressed in embryonic and adult tissues.

It is found in the cytoplasm. The protein resides in the cytoskeleton. It localises to the microtubule organizing center. The protein localises to the centrosome. Its subcellular location is the centriole. It is found in the cilium basal body. The protein resides in the spindle pole. Its function is as follows. Plays an important role in centriole assembly and/or stability and ciliogenesis. Involved in early steps of centriole duplication, as well as in the later steps of centriole length control. Acts in concert with POC1B to ensure centriole integrity and proper mitotic spindle formation. This chain is POC1 centriolar protein homolog A (Poc1a), found in Mus musculus (Mouse).